A 325-amino-acid polypeptide reads, in one-letter code: MIVVGIDHGTSGITACVMENKTVKSIFKMKRTEINENSFLKELEKHVNLNDIDLMGVCYSMGDGIDNITDIKKVDNRGVINLEGIGKKVGGGTRVYDEIKSSNIPAVVIPGLHKDVKSMDERFNALFSHIASPEKISICYNAYKTFGFENFILSDISSNTVTLLIKNGKIFGGFDACVGAVGILHGPLDLELIRNIDAKKITANEAFSKAGVVKVTESYKGVEDTKFEIMSNYKNNEKCKLAVDSLVLSVSMEINSLMFLTPDKNVILAGSIGIWENPNVSEMIKENIDGNVLVLNEESGAIGSAMIAEDILNGKKDILGIPVDF.

This sequence belongs to the UPF0285 family.

The polypeptide is UPF0285 protein MmarC5_0962 (Methanococcus maripaludis (strain C5 / ATCC BAA-1333)).